We begin with the raw amino-acid sequence, 330 residues long: Inactive hydroxysteroid dehydrogenase-like protein 1 (330 aa).

A2 is modified (N-acetylalanine). The tract at residues 2-82 (AAVDSFYLLY…SGATDGIGKA (81 aa)) is required for mitochondria translocation. Residues 74 to 80 (GATDGIG), D125, and K222 each bind NADP(+).

Belongs to the short-chain dehydrogenases/reductases (SDR) family. 17-beta-HSD 3 subfamily. As to quaternary structure, interacts with STYXL1.

It localises to the mitochondrion. This chain is Inactive hydroxysteroid dehydrogenase-like protein 1 (Hsdl1), found in Mus musculus (Mouse).